We begin with the raw amino-acid sequence, 404 residues long: S-adenosylmethionine synthase (404 aa).

His-18 is a binding site for ATP. Asp-20 serves as a coordination point for Mg(2+). Glu-46 lines the K(+) pocket. 2 residues coordinate L-methionine: Glu-59 and Gln-102. Residues 102–112 form a flexible loop region; sequence QSPEIAQGVDH. Residues 178-180, 249-250, Asp-258, 264-265, Ala-281, and Lys-285 contribute to the ATP site; these read DGK, KF, and RK. Residue Asp-258 coordinates L-methionine. Residue Lys-289 coordinates L-methionine.

The protein belongs to the AdoMet synthase family. Homotetramer; dimer of dimers. Requires Mg(2+) as cofactor. The cofactor is K(+).

The protein resides in the cytoplasm. The enzyme catalyses L-methionine + ATP + H2O = S-adenosyl-L-methionine + phosphate + diphosphate. The protein operates within amino-acid biosynthesis; S-adenosyl-L-methionine biosynthesis; S-adenosyl-L-methionine from L-methionine: step 1/1. Functionally, catalyzes the formation of S-adenosylmethionine (AdoMet) from methionine and ATP. The overall synthetic reaction is composed of two sequential steps, AdoMet formation and the subsequent tripolyphosphate hydrolysis which occurs prior to release of AdoMet from the enzyme. The sequence is that of S-adenosylmethionine synthase from Rhodococcus opacus (strain B4).